We begin with the raw amino-acid sequence, 333 residues long: 4-hydroxyproline epimerase (333 aa).

The Proton acceptor role is filled by cysteine 90. Residues 91-92 and aspartate 249 each bind substrate; that span reads GH. The active-site Proton donor is the cysteine 253. A substrate-binding site is contributed by 254–255; it reads GT.

This sequence belongs to the proline racemase family. As to quaternary structure, homodimer.

The catalysed reaction is trans-4-hydroxy-L-proline = cis-4-hydroxy-D-proline. Functionally, allows intracellular utilization of 4-hydroxyproline, one of the major constituents of host collagen, by converting 4-hydroxy-L-proline to 4-hydroxy-D-proline, which can be further metabolized by intracellular 4-hydroxy-D-proline oxidases. Strong B-cell mitogen. Plays an important role in the regulation of intra- and extracellular amino acid pools, allowing the bacterium to profit from host precursors and enzymatic pathways. This is 4-hydroxyproline epimerase from Brucella canis (strain ATCC 23365 / NCTC 10854 / RM-666).